A 184-amino-acid polypeptide reads, in one-letter code: Inorganic pyrophosphatase (184 aa).

Residues Lys19, Arg33, and Tyr45 each coordinate substrate. Residues Asp55, Asp60, and Asp92 each coordinate Mg(2+). Position 129 (Tyr129) interacts with substrate.

This sequence belongs to the PPase family. Homohexamer. Mg(2+) is required as a cofactor.

Its subcellular location is the cytoplasm. It carries out the reaction diphosphate + H2O = 2 phosphate + H(+). Functionally, catalyzes the hydrolysis of inorganic pyrophosphate (PPi) forming two phosphate ions. The chain is Inorganic pyrophosphatase from Mycoplasma genitalium (strain ATCC 33530 / DSM 19775 / NCTC 10195 / G37) (Mycoplasmoides genitalium).